Here is a 627-residue protein sequence, read N- to C-terminus: Sphingomyelin phosphodiesterase (627 aa).

An N-terminal signal peptide occupies residues 1-44; it reads MPHHRASSGQDHLRAGWEQRLERSLPAPRVGLLWMGLGLALVLA. A Saposin B-type domain is found at 83–167; sequence QNLTCPACKV…LLGSSCGHWD (85 aa). Asn-84 carries an N-linked (GlcNAc...) asparagine glycan. 3 disulfides stabilise this stretch: Cys-87–Cys-163, Cys-90–Cys-155, and Cys-118–Cys-129. Asn-173 is a glycosylation site (N-linked (GlcNAc...) asparagine). Asp-204 and His-206 together coordinate Zn(2+). 2 disulfide bridges follow: Cys-219-Cys-224 and Cys-225-Cys-248. Asp-276 and Asn-316 together coordinate Zn(2+). 2 N-linked (GlcNAc...) asparagine glycosylation sites follow: Asn-333 and Asn-393. Residues Cys-383 and Cys-429 are joined by a disulfide bond. His-423, His-455, and His-457 together coordinate Zn(2+). A Phosphoserine modification is found at Ser-506. Asn-518 is a glycosylation site (N-linked (GlcNAc...) asparagine). Disulfide bonds link Cys-582/Cys-586 and Cys-592/Cys-605. Asn-611 carries N-linked (GlcNAc...) asparagine glycosylation.

It belongs to the acid sphingomyelinase family. Monomer. Interacts with SORT1; the interaction is required for SMPD1 targeting to lysosomes. Zn(2+) serves as cofactor. In terms of processing, proteolytically processed. Mature lysosomal form arises from C-terminal proteolytic processing of pro-sphingomyelin phosphodiesterase. Post-translationally, both lysosomal and secreted forms are glycosylated but they show a differential pattern of glycosylation. Phosphorylated at Ser-506 by PRKCD upon stress stimuli. Phosphorylation is required for secretion. In terms of processing, this form is generated following cleavage by CASP7 in the extracellular milieu. It shows increased activity.

It localises to the lysosome. It is found in the lipid droplet. Its subcellular location is the secreted. The protein resides in the extracellular space. The enzyme catalyses a sphingomyelin + H2O = phosphocholine + an N-acylsphing-4-enine + H(+). It catalyses the reaction N-(octadecanoyl)-sphing-4-enine-1-phosphocholine + H2O = N-octadecanoylsphing-4-enine + phosphocholine + H(+). The catalysed reaction is a 1,2-diacyl-sn-glycero-3-phosphocholine + H2O = phosphocholine + a 1,2-diacyl-sn-glycerol + H(+). It carries out the reaction 1,2-dihexadecanoyl-sn-glycero-3-phosphocholine + H2O = 1,2-dihexadecanoyl-sn-glycerol + phosphocholine + H(+). Its activity is regulated as follows. Hydrolysis of liposomal sphingomyelin is stimulated by incorporation of diacylglycerol (DAG), ceramide and free fatty acids into the liposomal membranes. Phosphatidylcholine hydrolysis is inhibited by incorporation of cholesterol, ceramide, DAG, monoacylglycerol and fatty acids. Converts sphingomyelin to ceramide. Exists as two enzymatic forms that arise from alternative trafficking of a single protein precursor, one that is targeted to the endolysosomal compartment, whereas the other is released extracellularly. However, in response to various forms of stress, lysosomal exocytosis may represent a major source of the secretory form. Functionally, in the lysosomes, converts sphingomyelin to ceramide. Plays an important role in the export of cholesterol from the intraendolysosomal membranes. Also has phospholipase C activities toward 1,2-diacylglycerolphosphocholine and 1,2-diacylglycerolphosphoglycerol. Modulates stress-induced apoptosis through the production of ceramide. In terms of biological role, when secreted, modulates cell signaling with its ability to reorganize the plasma membrane by converting sphingomyelin to ceramide. Secreted form is increased in response to stress and inflammatory mediators such as IL1B, IFNG or TNF as well as upon infection with bacteria and viruses. Produces the release of ceramide in the outer leaflet of the plasma membrane playing a central role in host defense. Ceramide reorganizes these rafts into larger signaling platforms that are required to internalize P.aeruginosa, induce apoptosis and regulate the cytokine response in infected cells. In wounded cells, the lysosomal form is released extracellularly in the presence of Ca(2+) and promotes endocytosis and plasma membrane repair. Its function is as follows. This form is generated following cleavage by CASP7 in the extracellular milieu in response to bacterial infection. It shows increased ability to convert sphingomyelin to ceramide and promotes plasma membrane repair. Plasma membrane repair by ceramide counteracts the action of gasdermin-D (GSDMD) perforin (PRF1) pores that are formed in response to bacterial infection. (Microbial infection) Secretion is activated by bacteria such as P.aeruginosa, this activation results in the release of ceramide in the outer leaflet of the plasma membrane which facilitates the infection. In Mus musculus (Mouse), this protein is Sphingomyelin phosphodiesterase.